Here is a 115-residue protein sequence, read N- to C-terminus: Large ribosomal subunit protein uL18 (115 aa).

This sequence belongs to the universal ribosomal protein uL18 family. In terms of assembly, part of the 50S ribosomal subunit; part of the 5S rRNA/L5/L18/L25 subcomplex. Contacts the 5S and 23S rRNAs.

Functionally, this is one of the proteins that bind and probably mediate the attachment of the 5S RNA into the large ribosomal subunit, where it forms part of the central protuberance. The polypeptide is Large ribosomal subunit protein uL18 (Marinobacter nauticus (strain ATCC 700491 / DSM 11845 / VT8) (Marinobacter aquaeolei)).